Reading from the N-terminus, the 426-residue chain is D-tagatose-1,6-bisphosphate aldolase subunit KbaZ (426 aa).

Belongs to the GatZ/KbaZ family. KbaZ subfamily. In terms of assembly, forms a complex with KbaY.

It functions in the pathway carbohydrate metabolism; D-tagatose 6-phosphate degradation; D-glyceraldehyde 3-phosphate and glycerone phosphate from D-tagatose 6-phosphate: step 2/2. Its function is as follows. Component of the tagatose-1,6-bisphosphate aldolase KbaYZ that is required for full activity and stability of the Y subunit. Could have a chaperone-like function for the proper and stable folding of KbaY. When expressed alone, KbaZ does not show any aldolase activity. The polypeptide is D-tagatose-1,6-bisphosphate aldolase subunit KbaZ (Escherichia coli O6:K15:H31 (strain 536 / UPEC)).